Consider the following 249-residue polypeptide: NAD(P)H-quinone oxidoreductase subunit K (249 aa).

Residues cysteine 65, cysteine 66, cysteine 130, and cysteine 161 each coordinate [4Fe-4S] cluster.

This sequence belongs to the complex I 20 kDa subunit family. In terms of assembly, NDH-1 can be composed of about 15 different subunits; different subcomplexes with different compositions have been identified which probably have different functions. [4Fe-4S] cluster is required as a cofactor.

The protein resides in the cellular thylakoid membrane. The enzyme catalyses a plastoquinone + NADH + (n+1) H(+)(in) = a plastoquinol + NAD(+) + n H(+)(out). It carries out the reaction a plastoquinone + NADPH + (n+1) H(+)(in) = a plastoquinol + NADP(+) + n H(+)(out). In terms of biological role, NDH-1 shuttles electrons from an unknown electron donor, via FMN and iron-sulfur (Fe-S) centers, to quinones in the respiratory and/or the photosynthetic chain. The immediate electron acceptor for the enzyme in this species is believed to be plastoquinone. Couples the redox reaction to proton translocation, and thus conserves the redox energy in a proton gradient. Cyanobacterial NDH-1 also plays a role in inorganic carbon-concentration. The polypeptide is NAD(P)H-quinone oxidoreductase subunit K (Prochlorococcus marinus (strain NATL2A)).